Consider the following 1106-residue polypeptide: Probable NAD-specific glutamate dehydrogenase (1106 aa).

Lysine 654 is a catalytic residue.

This sequence belongs to the Glu/Leu/Phe/Val dehydrogenases family. In terms of assembly, homotetramer.

Its subcellular location is the cytoplasm. It catalyses the reaction L-glutamate + NAD(+) + H2O = 2-oxoglutarate + NH4(+) + NADH + H(+). NAD(+)-dependent glutamate dehydrogenase which degrades glutamate to ammonia and alpha-ketoglutarate. The protein is Probable NAD-specific glutamate dehydrogenase (gdh2) of Schizosaccharomyces pombe (strain 972 / ATCC 24843) (Fission yeast).